We begin with the raw amino-acid sequence, 304 residues long: Aspartate carbamoyltransferase catalytic subunit (304 aa).

Residues arginine 53 and threonine 54 each coordinate carbamoyl phosphate. Position 82 (lysine 82) interacts with L-aspartate. Carbamoyl phosphate contacts are provided by arginine 103, histidine 131, and glutamine 134. Arginine 163 and arginine 224 together coordinate L-aspartate. Carbamoyl phosphate contacts are provided by leucine 263 and proline 264.

Belongs to the aspartate/ornithine carbamoyltransferase superfamily. ATCase family. In terms of assembly, heterooligomer of catalytic and regulatory chains.

It carries out the reaction carbamoyl phosphate + L-aspartate = N-carbamoyl-L-aspartate + phosphate + H(+). It participates in pyrimidine metabolism; UMP biosynthesis via de novo pathway; (S)-dihydroorotate from bicarbonate: step 2/3. Its function is as follows. Catalyzes the condensation of carbamoyl phosphate and aspartate to form carbamoyl aspartate and inorganic phosphate, the committed step in the de novo pyrimidine nucleotide biosynthesis pathway. The chain is Aspartate carbamoyltransferase catalytic subunit from Haloarcula marismortui (strain ATCC 43049 / DSM 3752 / JCM 8966 / VKM B-1809) (Halobacterium marismortui).